A 339-amino-acid polypeptide reads, in one-letter code: Glyceraldehyde-3-phosphate dehydrogenase (339 aa).

NAD(+) is bound by residues Arg-12–Ile-13, Asp-34, and Lys-79. D-glyceraldehyde 3-phosphate contacts are provided by residues Ser-150–Thr-152, Thr-181, Thr-210–Gly-211, and Arg-233. The Nucleophile role is filled by Cys-151. Asn-316 serves as a coordination point for NAD(+).

This sequence belongs to the glyceraldehyde-3-phosphate dehydrogenase family. Homotetramer.

Its subcellular location is the cytoplasm. The catalysed reaction is D-glyceraldehyde 3-phosphate + phosphate + NAD(+) = (2R)-3-phospho-glyceroyl phosphate + NADH + H(+). Its pathway is carbohydrate degradation; glycolysis; pyruvate from D-glyceraldehyde 3-phosphate: step 1/5. The polypeptide is Glyceraldehyde-3-phosphate dehydrogenase (GPD) (Cryptococcus neoformans var. neoformans serotype D (strain B-3501A) (Filobasidiella neoformans)).